The primary structure comprises 1226 residues: Probable phosphorylase b kinase regulatory subunit alpha (1226 aa).

A disordered region spans residues 666–688 (NEKITTPRGPRTLRRGESVKDRS). The span at 679 to 688 (RRGESVKDRS) shows a compositional bias: basic and acidic residues.

Belongs to the phosphorylase b kinase regulatory chain family.

Its pathway is glycan biosynthesis; glycogen metabolism. In terms of biological role, phosphorylase b kinase catalyzes the phosphorylation of serine in certain substrates, including troponin I. The alpha chain may bind calmodulin. This chain is Probable phosphorylase b kinase regulatory subunit alpha, found in Caenorhabditis elegans.